A 284-amino-acid chain; its full sequence is NAD kinase (284 aa).

Catalysis depends on aspartate 65, which acts as the Proton acceptor. NAD(+) is bound by residues 65-66 (DG), 139-140 (ND), arginine 150, arginine 167, aspartate 169, and glutamine 239.

The protein belongs to the NAD kinase family. The cofactor is a divalent metal cation.

It is found in the cytoplasm. It catalyses the reaction NAD(+) + ATP = ADP + NADP(+) + H(+). In terms of biological role, involved in the regulation of the intracellular balance of NAD and NADP, and is a key enzyme in the biosynthesis of NADP. Catalyzes specifically the phosphorylation on 2'-hydroxyl of the adenosine moiety of NAD to yield NADP. The protein is NAD kinase of Desulfatibacillum aliphaticivorans.